Consider the following 446-residue polypeptide: Deoxyguanosinetriphosphate triphosphohydrolase-like protein (446 aa).

Positions 1-28 (MSSSVWQERRHGEDKQRRNDHRSPFQRD) are disordered. Residues 7–28 (QERRHGEDKQRRNDHRSPFQRD) show a composition bias toward basic and acidic residues. In terms of domain architecture, HD spans 59–252 (RLTHSLEVSQ…MELADDIAYA (194 aa)).

The protein belongs to the dGTPase family. Type 2 subfamily.

This Shewanella sp. (strain MR-7) protein is Deoxyguanosinetriphosphate triphosphohydrolase-like protein.